Here is a 235-residue protein sequence, read N- to C-terminus: FsC-acetyl coenzyme A-N(2)-transacetylase (235 aa).

The N-acetyltransferase domain maps to 14–190 (LELVPLGHEH…RYSITREEWL (177 aa)). CoA contacts are provided by residues 106–108 (FRV), G114, N146, and 151–153 (AVM).

It functions in the pathway siderophore biosynthesis. Its function is as follows. FsC-acetyl coenzyme A-N(2)-transacetylase; part of the siderophore biosynthetic pathway. Aspergillus fumigatus produces 4 types of siderophores, low-molecular-mass iron chelators, including excreted fusarinine C (FsC) and triacetylfusarinine C (TAFC) for iron uptake and intacellular ferricrocin (FC) for hyphal and hydroxyferricrocin (HFC) for conidial iron distribution and storage. TAFC consists of 3 N(2)-acetyl-N(5)-anhydromevalonyl-N(5)-hydroxyornithine residues cyclically linked by ester bonds; FC is a cyclic hexapeptide with the structure Gly-Ser-Gly-(N(5)-acetyl-N(5)-hydroxyornithine)x3. The biosynthesis of all four siderophores depends on the hydroxylation of ornithine, catalyzed by the monooxygenase sidA. Subsequently, the pathways for biosynthesis of extra- and intracellular siderophores split. For biosynthesis of extracellular siderophores, the transacylase sidF transfers anhydromevalonyl to N(5)-hydroxyornithine. The required anhydromevalonyl-CoA moiety is derived from mevalonate by CoA ligation and dehydration catalyzed by sidI and sidH respectively. The acetylation of N(5)-hydroxyornithine for FC biosynthesis involves the constitutively expressed sidL. FC is hydroxylated to HFC by an as yet uncharacterized enzyme during conidiation. Assembly of fusarinine C (FsC) and FC is catalyzed by two different nonribosomal peptide synthetases (NRPS), sidD and sidC respectively. Subsequently, sidG catalyzes N2-acetylation of FsC for forming TAFC. Both extra- and intracellular siderophores are crucial for growth during iron limitation and virulence. The protein is FsC-acetyl coenzyme A-N(2)-transacetylase of Aspergillus fumigatus (strain ATCC MYA-4609 / CBS 101355 / FGSC A1100 / Af293) (Neosartorya fumigata).